The following is a 330-amino-acid chain: Ribosomal RNA large subunit methyltransferase F (330 aa).

It belongs to the methyltransferase superfamily. METTL16/RlmF family.

Its subcellular location is the cytoplasm. The catalysed reaction is adenosine(1618) in 23S rRNA + S-adenosyl-L-methionine = N(6)-methyladenosine(1618) in 23S rRNA + S-adenosyl-L-homocysteine + H(+). Specifically methylates the adenine in position 1618 of 23S rRNA. The polypeptide is Ribosomal RNA large subunit methyltransferase F (Pseudoalteromonas atlantica (strain T6c / ATCC BAA-1087)).